Here is a 454-residue protein sequence, read N- to C-terminus: Adenosylmethionine-8-amino-7-oxononanoate aminotransferase (454 aa).

Position 119-120 (119-120 (GA)) interacts with pyridoxal 5'-phosphate. Tyr152 serves as a coordination point for substrate. Pyridoxal 5'-phosphate is bound at residue Asp257. Residues Lys286, Gly321, and Arg416 each coordinate substrate. An N6-(pyridoxal phosphate)lysine modification is found at Lys286.

Belongs to the class-III pyridoxal-phosphate-dependent aminotransferase family. BioA subfamily. In terms of assembly, homodimer. Pyridoxal 5'-phosphate serves as cofactor.

The protein localises to the cytoplasm. The enzyme catalyses (8S)-8-amino-7-oxononanoate + S-adenosyl-L-methionine = S-adenosyl-4-methylsulfanyl-2-oxobutanoate + (7R,8S)-7,8-diammoniononanoate. It participates in cofactor biosynthesis; biotin biosynthesis; 7,8-diaminononanoate from 8-amino-7-oxononanoate (SAM route): step 1/1. In terms of biological role, catalyzes the transfer of the alpha-amino group from S-adenosyl-L-methionine (SAM) to 7-keto-8-aminopelargonic acid (KAPA) to form 7,8-diaminopelargonic acid (DAPA). It is the only aminotransferase known to utilize SAM as an amino donor. The polypeptide is Adenosylmethionine-8-amino-7-oxononanoate aminotransferase (Anoxybacillus flavithermus (strain DSM 21510 / WK1)).